Reading from the N-terminus, the 1461-residue chain is Phospholipid-transporting ATPase VB (1461 aa).

Residues 1 to 82 (MALSVDSSWH…TTKYTLFTFL (82 aa)) lie on the Cytoplasmic side of the membrane. A helical membrane pass occupies residues 83-104 (PRNLFEQFHRWANLYFLFLVIL). The Exoplasmic loop segment spans residues 105–110 (NWMPSM). Residues 111–132 (EVFHREITMLPLAIVLFVIMIK) form a helical membrane-spanning segment. Over 133-316 (DGMEDFKRHR…SKIERRMNID (184 aa)) the chain is Cytoplasmic. A helical transmembrane segment spans residues 317 to 338 (IFFCIGILILMCLIGAVGHSIW). Topologically, residues 339–368 (NGTFEEHPPFDVPDANGSFLPSALGGFYMF) are exoplasmic loop. Residues 369-390 (LTMIILLQVLIPISLYVSIELV) form a helical membrane-spanning segment. The Cytoplasmic portion of the chain corresponds to 391–1111 (KLGQVFFLSN…GHWCYSRLAR (721 aa)). Catalysis depends on D433, which acts as the 4-aspartylphosphate intermediate. ATP contacts are provided by D433, K434, and T435. Residue D433 participates in Mg(2+) binding. T435 provides a ligand contact to Mg(2+). Composition is skewed to polar residues over residues 496–511 (MRSQ…SQSA) and 530–539 (SQPPVAFSSS). 2 disordered regions span residues 496 to 541 (MRSQ…SSIE) and 640 to 687 (TAPS…MWDQ). 9 residues coordinate ATP: E724, F766, K790, R835, T915, G916, D917, R1029, and K1035. Position 1055 (D1055) interacts with Mg(2+). 2 residues coordinate ATP: N1058 and D1059. Mg(2+) is bound at residue D1059. Residues 1112-1132 (MVVYYLYKNVCYVNLLFWYQF) form a helical membrane-spanning segment. Over 1133-1144 (FCGFSSSTMIDY) the chain is Exoplasmic loop. The chain crosses the membrane as a helical span at residues 1145-1164 (WQMIFFNLFFTSLPPLVFGV). Over 1165 to 1194 (LDKDISAETLLALPELYKSGQNSECYNLST) the chain is Cytoplasmic. Residues 1195-1216 (FWISMVDAFYQSLICFFIPYLA) form a helical membrane-spanning segment. The Exoplasmic loop portion of the chain corresponds to 1217 to 1223 (YKGSDID). A helical transmembrane segment spans residues 1224-1246 (VFTFGTPINTISLTTILLHQAME). The Cytoplasmic segment spans residues 1247 to 1252 (MKTWTI). The chain crosses the membrane as a helical span at residues 1253-1273 (FHGVVLLGSFLMYFLVSLLYN). Residues 1274–1291 (ATCVICNSPTNPYWVMEG) lie on the Exoplasmic loop side of the membrane. A helical membrane pass occupies residues 1292-1316 (QLSNPTFYLVCFLTPVVALLPRYFF). Residues 1317–1461 (LSLQGTCGKS…HRRSQSSLTI (145 aa)) lie on the Cytoplasmic side of the membrane. The interval 1346–1397 (IQSWRSRQRPAPVPEVARPTHHPVSSITGQDFSASTPKSSNPPKRKHVEESV) is disordered. A compositionally biased stretch (polar residues) spans 1368–1387 (PVSSITGQDFSASTPKSSNP).

It belongs to the cation transport ATPase (P-type) (TC 3.A.3) family. Type IV subfamily. In terms of assembly, component of a P4-ATPase flippase complex which consists of a catalytic alpha subunit ATP10B and an accessory beta subunit TMEM30A. It depends on Mg(2+) as a cofactor. Post-translationally, autophosphorylated at the conserved aspartate of the P-type ATPase signature sequence. As to expression, expressed in predominantly in brain structures including medulla oblongata, substantia nigra and basal ganglia. Expressed in the gastrointestinal system with highest levels in the small intestine and colon. Also expressed at low levels in testis and thymus.

It localises to the late endosome membrane. Its subcellular location is the lysosome membrane. The protein resides in the endoplasmic reticulum membrane. It catalyses the reaction ATP + H2O + phospholipidSide 1 = ADP + phosphate + phospholipidSide 2.. The catalysed reaction is a beta-D-glucosyl-(1&lt;-&gt;1')-N-acylsphing-4-enine(out) + ATP + H2O = a beta-D-glucosyl-(1&lt;-&gt;1')-N-acylsphing-4-enine(in) + ADP + phosphate + H(+). Its function is as follows. Catalytic component of a P4-ATPase flippase complex, which catalyzes the hydrolysis of ATP coupled to the transport of glucosylceramide (GlcCer) from the outer to the inner leaflet of lysosome membranes. Plays an important role in the maintenance of lysosome membrane integrity and function in cortical neurons. This chain is Phospholipid-transporting ATPase VB, found in Homo sapiens (Human).